Consider the following 195-residue polypeptide: Large ribosomal subunit protein uL5 (195 aa).

Belongs to the universal ribosomal protein uL5 family. In terms of assembly, part of the 50S ribosomal subunit; part of the 5S rRNA/L5/L18/L25 subcomplex. Contacts the 5S rRNA and the P site tRNA. Forms a bridge to the 30S subunit in the 70S ribosome.

Its function is as follows. This is one of the proteins that bind and probably mediate the attachment of the 5S RNA into the large ribosomal subunit, where it forms part of the central protuberance. In the 70S ribosome it contacts protein S13 of the 30S subunit (bridge B1b), connecting the 2 subunits; this bridge is implicated in subunit movement. Contacts the P site tRNA; the 5S rRNA and some of its associated proteins might help stabilize positioning of ribosome-bound tRNAs. This is Large ribosomal subunit protein uL5 from Chlorobium phaeobacteroides (strain DSM 266 / SMG 266 / 2430).